We begin with the raw amino-acid sequence, 579 residues long: Alpha-longipinene synthase (579 aa).

Residues Asp-332, Asp-336, Asp-476, and Asn-484 each coordinate Mg(2+). A DDXXD motif motif is present at residues 332-336; the sequence is DDLYD.

This sequence belongs to the terpene synthase family. Tpsd subfamily. Mg(2+) serves as cofactor. It depends on Mn(2+) as a cofactor.

The enzyme catalyses (2E,6E)-farnesyl diphosphate = alpha-longipinene + diphosphate. It functions in the pathway sesquiterpene biosynthesis. It participates in terpene metabolism; oleoresin biosynthesis. Functionally, terpene synthase (TPS) involved in the biosynthesis of sesquiterpene natural products included in conifer oleoresin secretions and volatile emissions; these compounds contribute to biotic and abiotic stress defense against herbivores and pathogens. Catalyzes the conversion of (2E,6E)-farnesyl diphosphate (FPP) to alpha-longipinene. This chain is Alpha-longipinene synthase, found in Picea sitchensis (Sitka spruce).